We begin with the raw amino-acid sequence, 445 residues long: Phosphoglucosamine mutase (445 aa).

Ser101 (phosphoserine intermediate) is an active-site residue. Ser101, Asp240, Asp242, and Asp244 together coordinate Mg(2+). A Phosphoserine modification is found at Ser101.

This sequence belongs to the phosphohexose mutase family. It depends on Mg(2+) as a cofactor. Activated by phosphorylation.

It carries out the reaction alpha-D-glucosamine 1-phosphate = D-glucosamine 6-phosphate. Functionally, catalyzes the conversion of glucosamine-6-phosphate to glucosamine-1-phosphate. In Pseudomonas aeruginosa (strain UCBPP-PA14), this protein is Phosphoglucosamine mutase.